The chain runs to 428 residues: Glutamate-1-semialdehyde 2,1-aminomutase (428 aa).

Residue Lys-265 is modified to N6-(pyridoxal phosphate)lysine.

The protein belongs to the class-III pyridoxal-phosphate-dependent aminotransferase family. HemL subfamily. In terms of assembly, homodimer. Pyridoxal 5'-phosphate is required as a cofactor.

It localises to the cytoplasm. It carries out the reaction (S)-4-amino-5-oxopentanoate = 5-aminolevulinate. It functions in the pathway porphyrin-containing compound metabolism; protoporphyrin-IX biosynthesis; 5-aminolevulinate from L-glutamyl-tRNA(Glu): step 2/2. The protein is Glutamate-1-semialdehyde 2,1-aminomutase of Shewanella woodyi (strain ATCC 51908 / MS32).